The primary structure comprises 147 residues: Prefoldin subunit alpha (147 aa).

This sequence belongs to the prefoldin alpha subunit family. In terms of assembly, heterohexamer of two alpha and four beta subunits.

Its subcellular location is the cytoplasm. In terms of biological role, molecular chaperone capable of stabilizing a range of proteins. Seems to fulfill an ATP-independent, HSP70-like function in archaeal de novo protein folding. This Saccharolobus islandicus (strain L.S.2.15 / Lassen #1) (Sulfolobus islandicus) protein is Prefoldin subunit alpha.